A 198-amino-acid chain; its full sequence is tRNA (pseudouridine(54)-N(1))-methyltransferase (198 aa).

Position 128 (Leu128) interacts with S-adenosyl-L-methionine.

This sequence belongs to the methyltransferase superfamily. TrmY family. In terms of assembly, homodimer.

The protein localises to the cytoplasm. The enzyme catalyses pseudouridine(54) in tRNA + S-adenosyl-L-methionine = N(1)-methylpseudouridine(54) in tRNA + S-adenosyl-L-homocysteine + H(+). Specifically catalyzes the N1-methylation of pseudouridine at position 54 (Psi54) in tRNAs. This is tRNA (pseudouridine(54)-N(1))-methyltransferase from Haloferax volcanii (strain ATCC 29605 / DSM 3757 / JCM 8879 / NBRC 14742 / NCIMB 2012 / VKM B-1768 / DS2) (Halobacterium volcanii).